We begin with the raw amino-acid sequence, 326 residues long: Beta-ketoacyl-[acyl-carrier-protein] synthase III (326 aa).

Catalysis depends on residues Cys112 and His251. The tract at residues 252–256 is ACP-binding; sequence QANSR. The active site involves Asn281.

It belongs to the thiolase-like superfamily. FabH family. As to quaternary structure, homodimer.

Its subcellular location is the cytoplasm. It catalyses the reaction malonyl-[ACP] + acetyl-CoA + H(+) = 3-oxobutanoyl-[ACP] + CO2 + CoA. The protein operates within lipid metabolism; fatty acid biosynthesis. Its function is as follows. Catalyzes the condensation reaction of fatty acid synthesis by the addition to an acyl acceptor of two carbons from malonyl-ACP. Catalyzes the first condensation reaction which initiates fatty acid synthesis and may therefore play a role in governing the total rate of fatty acid production. Possesses both acetoacetyl-ACP synthase and acetyl transacylase activities. Its substrate specificity determines the biosynthesis of branched-chain and/or straight-chain of fatty acids. The protein is Beta-ketoacyl-[acyl-carrier-protein] synthase III of Clostridium botulinum (strain Loch Maree / Type A3).